Consider the following 421-residue polypeptide: Alpha-tubulin N-acetyltransferase 1 (421 aa).

The N-acetyltransferase domain maps to 1 to 190 (MEFPFDVDAL…NNFVIFEGFF (190 aa)). At lysine 56 the chain carries N6-acetyllysine; by autocatalysis. 124–137 (FYIHESVQRHGHGR) is a binding site for acetyl-CoA. An N6-acetyllysine; by autocatalysis modification is found at lysine 146. Acetyl-CoA is bound at residue 160 to 169 (SPKLLKFLNK). The tract at residues 214 to 235 (PIPAAPARKLPPKRAEGDIKPY) is disordered. Residues 226 to 235 (KRAEGDIKPY) are compositionally biased toward basic and acidic residues. N6-acetyllysine; by autocatalysis occurs at positions 233 and 244. The disordered stretch occupies residues 252 to 284 (PLNRAPRRATPPAHPPPRSSSLGNSPDRGPLRP). A phosphoserine mark is found at serine 272 and serine 276. Arginine 305 bears the Asymmetric dimethylarginine mark. Serine 315 carries the post-translational modification Phosphoserine. Arginine 323 carries the post-translational modification Omega-N-methylarginine. The span at 342 to 351 (FNTSFLGTGN) shows a compositional bias: polar residues. Residues 342–398 (FNTSFLGTGNQERKQGEQEAEDRSASEDQVLLQDGSGEEPTHTVAPRAQAPPAQSWM) are disordered. The span at 352–367 (QERKQGEQEAEDRSAS) shows a compositional bias: basic and acidic residues.

This sequence belongs to the acetyltransferase ATAT1 family. As to quaternary structure, component of the BBSome complex. Interacts with AP2 alpha-adaptins, including AP2A2, but not with AP1 gamma-adaptin (AP1G1/AP1G2); this interaction is required for efficient alpha-tubulin acetylation, hence clathrin-coated pits are sites of microtubule acetylation. Autoacetylation strongly increases tubulin acetylation.

The protein localises to the cytoplasm. It is found in the membrane. Its subcellular location is the clathrin-coated pit. The protein resides in the cell junction. It localises to the focal adhesion. The protein localises to the cell projection. It is found in the axon. Its subcellular location is the cytoskeleton. The protein resides in the spindle. The enzyme catalyses L-lysyl-[alpha-tubulin] + acetyl-CoA = N(6)-acetyl-L-lysyl-[alpha-tubulin] + CoA + H(+). Functionally, specifically acetylates 'Lys-40' in alpha-tubulin on the lumenal side of microtubules. Promotes microtubule destabilization and accelerates microtubule dynamics; this activity may be independent of acetylation activity. Acetylates alpha-tubulin with a slow enzymatic rate, due to a catalytic site that is not optimized for acetyl transfer. Enters the microtubule through each end and diffuses quickly throughout the lumen of microtubules. Acetylates only long/old microtubules because of its slow acetylation rate since it does not have time to act on dynamically unstable microtubules before the enzyme is released. Required for normal sperm flagellar function. Promotes directional cell locomotion and chemotaxis, through AP2A2-dependent acetylation of alpha-tubulin at clathrin-coated pits that are concentrated at the leading edge of migrating cells. May facilitate primary cilium assembly. The sequence is that of Alpha-tubulin N-acetyltransferase 1 from Rattus norvegicus (Rat).